We begin with the raw amino-acid sequence, 162 residues long: Transcription elongation factor GreA (162 aa).

Residues 48 to 76 (NSEYQSAKDEQAFVEGRVKQLQQMIQFAQ) are a coiled coil. Positions 111-132 (GSAESDPLSGKISNDSPMGKAL) are disordered.

Belongs to the GreA/GreB family.

Functionally, necessary for efficient RNA polymerase transcription elongation past template-encoded arresting sites. The arresting sites in DNA have the property of trapping a certain fraction of elongating RNA polymerases that pass through, resulting in locked ternary complexes. Cleavage of the nascent transcript by cleavage factors such as GreA or GreB allows the resumption of elongation from the new 3'terminus. GreA releases sequences of 2 to 3 nucleotides. The chain is Transcription elongation factor GreA from Oenococcus oeni (strain ATCC BAA-331 / PSU-1).